The chain runs to 173 residues: ATP synthase subunit b (173 aa).

Residues 25 to 45 traverse the membrane as a helical segment; sequence LINLVIVIGVLYWFLKGFLGG.

It belongs to the ATPase B chain family. In terms of assembly, F-type ATPases have 2 components, F(1) - the catalytic core - and F(0) - the membrane proton channel. F(1) has five subunits: alpha(3), beta(3), gamma(1), delta(1), epsilon(1). F(0) has four main subunits: a(1), b(1), b'(1) and c(10-14). The alpha and beta chains form an alternating ring which encloses part of the gamma chain. F(1) is attached to F(0) by a central stalk formed by the gamma and epsilon chains, while a peripheral stalk is formed by the delta, b and b' chains.

It is found in the cellular thylakoid membrane. In terms of biological role, f(1)F(0) ATP synthase produces ATP from ADP in the presence of a proton or sodium gradient. F-type ATPases consist of two structural domains, F(1) containing the extramembraneous catalytic core and F(0) containing the membrane proton channel, linked together by a central stalk and a peripheral stalk. During catalysis, ATP synthesis in the catalytic domain of F(1) is coupled via a rotary mechanism of the central stalk subunits to proton translocation. Functionally, component of the F(0) channel, it forms part of the peripheral stalk, linking F(1) to F(0). This chain is ATP synthase subunit b, found in Synechococcus sp. (strain CC9311).